A 118-amino-acid chain; its full sequence is HTH-type transcriptional regulator CmtR (118 aa).

Positions 3–97 (TCEMRESALA…ELVQVVLAVD (95 aa)) constitute an HTH arsR-type domain. Cys-57, Cys-61, and Cys-102 together coordinate Cd(2+).

As to quaternary structure, homodimer.

Its function is as follows. Metal-responsive transcriptional repressor for the cmt operon. Binding of cadmium or lead causes the repressor to dissociate from the DNA. This is HTH-type transcriptional regulator CmtR (cmtR) from Mycobacterium bovis (strain ATCC BAA-935 / AF2122/97).